A 116-amino-acid chain; its full sequence is MNFQVFSLIFFNFVYYCSCSTFEEALCELEKEERVKVLRCYEENTDPGILLYSKSFLSCLLDERASFITLNEMACGKTFSTNERRACFEEANVFLVNFTEEMKKKHKNAVKKCFDK.

The N-terminal stretch at 1-19 (MNFQVFSLIFFNFVYYCSC) is a signal peptide.

In terms of processing, contains 3 disulfide bonds. In terms of tissue distribution, expressed by the venom gland.

The protein resides in the secreted. This chain is Venom protein 54.1, found in Lychas mucronatus (Chinese swimming scorpion).